The sequence spans 413 residues: Multifunctional CCA protein (413 aa).

Positions 8 and 11 each coordinate ATP. Residues glycine 8 and arginine 11 each contribute to the CTP site. The Mg(2+) site is built by aspartate 21 and aspartate 23. ATP contacts are provided by arginine 91, arginine 143, and arginine 146. Residues arginine 91, arginine 143, and arginine 146 each contribute to the CTP site. The region spanning 232-333 (TGVHVMMVVD…VRLFERSDAL (102 aa)) is the HD domain.

It belongs to the tRNA nucleotidyltransferase/poly(A) polymerase family. Bacterial CCA-adding enzyme type 1 subfamily. In terms of assembly, monomer. Can also form homodimers and oligomers. Mg(2+) serves as cofactor. The cofactor is Ni(2+).

The enzyme catalyses a tRNA precursor + 2 CTP + ATP = a tRNA with a 3' CCA end + 3 diphosphate. It catalyses the reaction a tRNA with a 3' CCA end + 2 CTP + ATP = a tRNA with a 3' CCACCA end + 3 diphosphate. Its function is as follows. Catalyzes the addition and repair of the essential 3'-terminal CCA sequence in tRNAs without using a nucleic acid template. Adds these three nucleotides in the order of C, C, and A to the tRNA nucleotide-73, using CTP and ATP as substrates and producing inorganic pyrophosphate. tRNA 3'-terminal CCA addition is required both for tRNA processing and repair. Also involved in tRNA surveillance by mediating tandem CCA addition to generate a CCACCA at the 3' terminus of unstable tRNAs. While stable tRNAs receive only 3'-terminal CCA, unstable tRNAs are marked with CCACCA and rapidly degraded. The chain is Multifunctional CCA protein from Burkholderia lata (strain ATCC 17760 / DSM 23089 / LMG 22485 / NCIMB 9086 / R18194 / 383).